Here is a 239-residue protein sequence, read N- to C-terminus: Sugar fermentation stimulation protein homolog (239 aa).

The protein belongs to the SfsA family.

The polypeptide is Sugar fermentation stimulation protein homolog (Rhizobium meliloti (strain 1021) (Ensifer meliloti)).